The following is a 425-amino-acid chain: E3 ubiquitin-protein ligase GW2 (425 aa).

Residues 62-105 (CPICFLYYPSLNRSKCCSKGICTECFLQMKPTHTAQPTQCPFCK) form an RING-type; degenerate zinc finger.

Expressed in roots, shoots, leaves, inflorescence meristems, stamens, pistils, spikelet hulls and endosperms 4 days after fertilization.

The protein localises to the cytoplasm. The catalysed reaction is S-ubiquitinyl-[E2 ubiquitin-conjugating enzyme]-L-cysteine + [acceptor protein]-L-lysine = [E2 ubiquitin-conjugating enzyme]-L-cysteine + N(6)-ubiquitinyl-[acceptor protein]-L-lysine.. Its pathway is protein modification; protein ubiquitination. In terms of biological role, E3 ubiquitin-protein ligase involved in the regulation of grain size. May limit grain width and weight by restricting cell proliferation of the spikelet hull. Possesses E3 ubiquitin-protein ligase activity in vitro. This chain is E3 ubiquitin-protein ligase GW2, found in Oryza sativa subsp. indica (Rice).